Here is a 261-residue protein sequence, read N- to C-terminus: RING finger protein 208 (261 aa).

Residues 83-106 (PALEGAPHTPPLPRRPRKGSSELG) are disordered. Serine 102 is subject to Phosphoserine. Residues 143 to 190 (CPTCGHSYNVTQRRPRVLSCLHSVCEQCLQILYESCPKYKFISCPTCR) form an RING-type zinc finger.

This Homo sapiens (Human) protein is RING finger protein 208 (RNF208).